A 293-amino-acid chain; its full sequence is DDRGK domain-containing protein 1 (293 aa).

The Lumenal portion of the chain corresponds to 1–6 (MWGPLI). Residues 7–27 (YALLGLAIVAAAFLFVRRSQA) traverse the membrane as a helical segment. Residues 28 to 293 (KEVVPVADDD…PADVDETTTA (266 aa)) lie on the Cytoplasmic side of the membrane. 2 disordered regions span residues 30–151 (VVPV…RQKE) and 273–293 (TDVE…TTTA). Basic and acidic residues-rich tracts occupy residues 90 to 126 (KLQE…KERE) and 133 to 151 (ERQR…RQKE).

It belongs to the DDRGK1 family.

Its subcellular location is the endoplasmic reticulum membrane. In terms of biological role, substrate adapter for ufmylation, the covalent attachment of the ubiquitin-like modifier UFM1 to substrate proteins. This chain is DDRGK domain-containing protein 1, found in Monosiga brevicollis (Choanoflagellate).